The chain runs to 146 residues: Snaclec coagulation factor IX/factor X-binding protein subunit B (146 aa).

Residues 1–23 (MGRFIFLSFGLLVVFLSLSGTGA) form the signal peptide. Cystine bridges form between cysteine 25-cysteine 36, cysteine 53-cysteine 142, and cysteine 119-cysteine 134. Residues 32 to 143 (YEGHCYKPFN…CRMEAYFVCE (112 aa)) enclose the C-type lectin domain. Residues serine 64 and glutamate 70 each contribute to the Ca(2+) site. Ca(2+) is bound at residue glutamate 143.

Belongs to the snaclec family. As to quaternary structure, heterodimer with subunit A of IX/X-bp or IX-bp; disulfide-linked. As to expression, expressed by the venom gland.

It is found in the secreted. Functionally, when linked to subunit A of IX/X-bp, anticoagulant protein which binds to the gamma-carboxyglutamic acid-domain regions of factors IX (F9) and factor X (F10) in the presence of calcium with a 1 to 1 stoichiometry. Its function is as follows. When linked to subunit A of IX-bp, anticoagulant protein which binds to the gamma-carboxyglutamic acid-domain regions of factor IX (but not to factor X) in the presence of calcium with a 1 to 1 stoichiometry. The polypeptide is Snaclec coagulation factor IX/factor X-binding protein subunit B (Gloydius halys (Chinese water mocassin)).